Reading from the N-terminus, the 311-residue chain is Reaction center protein L chain (311 aa).

3 helical membrane-spanning segments follow: residues 68–90 (FWGF…ETIL), 123–151 (GFAW…SMKL), and 156–178 (HVPI…RPIA). Positions 183 and 213 each coordinate (7R,8Z)-bacteriochlorophyll b. The helical transmembrane segment at 211 to 238 (PFHAIGITGLFASTWLLACHGSLILSAA) threads the bilayer. Fe cation is bound at residue His230. A ubiquinone is bound at residue Phe253. Residues 262-287 (GESGVHRLGYIFAIGGILSADLCILL) traverse the membrane as a helical segment. Position 267 (His267) interacts with Fe cation.

The protein belongs to the reaction center PufL/M/PsbA/D family. In terms of assembly, reaction center is composed of four bacteriochlorophylls, two bacteriopheophytins, two ubiquinones, one iron, and two highly hydrophobic polypeptide chains (designated L and M).

It is found in the cell membrane. The reaction center is a membrane-bound complex that mediates the initial photochemical event in the electron transfer process of photosynthesis. The protein is Reaction center protein L chain (pufL) of Chloroflexus aurantiacus (strain ATCC 29366 / DSM 635 / J-10-fl).